The following is a 133-amino-acid chain: Small ribosomal subunit protein uS9 (133 aa).

Positions V114–R133 are disordered. Positions K118 to R133 are enriched in basic residues.

Belongs to the universal ribosomal protein uS9 family.

This chain is Small ribosomal subunit protein uS9, found in Fusobacterium nucleatum subsp. nucleatum (strain ATCC 25586 / DSM 15643 / BCRC 10681 / CIP 101130 / JCM 8532 / KCTC 2640 / LMG 13131 / VPI 4355).